The sequence spans 1034 residues: Putative beta-glucuronidase (1034 aa).

The active-site Proton donor is the Glu432. The CBM6 domain maps to Val909–Asp1034.

Belongs to the glycosyl hydrolase 2 family.

Its subcellular location is the cytoplasm. The catalysed reaction is a beta-D-glucuronoside + H2O = D-glucuronate + an alcohol. Functionally, glycoside hydrolase that may be involved in ulvan degradation. Ulvan is the main polysaccharide component of the Ulvales (green seaweed) cell wall. It is composed of disaccharide building blocks comprising 3-sulfated rhamnose (Rha3S) linked to D-glucuronic acid (GlcA), L-iduronic acid (IduA), or D-xylose (Xyl). The sequence is that of Putative beta-glucuronidase from Formosa agariphila (strain DSM 15362 / KCTC 12365 / LMG 23005 / KMM 3901 / M-2Alg 35-1).